The following is a 538-amino-acid chain: Chaperonin GroEL (538 aa).

ATP contacts are provided by residues 29–32 (TIGP), 86–90 (DGTTT), G413, 476–478 (NAA), and D492.

Belongs to the chaperonin (HSP60) family. As to quaternary structure, forms a cylinder of 14 subunits composed of two heptameric rings stacked back-to-back. Interacts with the co-chaperonin GroES.

Its subcellular location is the cytoplasm. The catalysed reaction is ATP + H2O + a folded polypeptide = ADP + phosphate + an unfolded polypeptide.. Functionally, together with its co-chaperonin GroES, plays an essential role in assisting protein folding. The GroEL-GroES system forms a nano-cage that allows encapsulation of the non-native substrate proteins and provides a physical environment optimized to promote and accelerate protein folding. In Staphylococcus aureus (strain Mu3 / ATCC 700698), this protein is Chaperonin GroEL.